The primary structure comprises 692 residues: Tripartite terminase subunit 1 (692 aa).

The C3H1-type zinc-finger motif lies at 190-218 (CYLCYEELQMTPNNGSSVQKRLNGVLCEH). 634–641 (YNELYGQR) serves as a coordination point for ATP.

The protein belongs to the herpesviridae TRM1 protein family. In terms of assembly, associates with TRM2 and TRM3 to form the tripartite terminase complex. Interacts with portal protein.

It is found in the host nucleus. Functionally, component of the molecular motor that translocates viral genomic DNA in empty capsid during DNA packaging. Forms a tripartite terminase complex together with TRM2 and TRM3 in the host cytoplasm. Once the complex reaches the host nucleus, it interacts with the capsid portal vertex. This portal forms a ring in which genomic DNA is translocated into the capsid. TRM1 carries an endonuclease activity that plays an important role for the cleavage of concatemeric viral DNA into unit length genomes. In Elephas maximus (Indian elephant), this protein is Tripartite terminase subunit 1.